The primary structure comprises 160 residues: MKLNELRDNHGARPKSKRLGRGIGSGKGKTSGKGVKGQKAREGVSLNGFEGGQLPIYRRLPKRGFVNIFRKEYAPLNIGTLNDAIEAGRVDASQEITEDALRAAGLVRGGKVAGVRLLARGEITRAVKITVAGASAAARAAVEQAGGSITTTVVAEAAEA.

A compositionally biased stretch (basic and acidic residues) spans 1-11 (MKLNELRDNHG). Residues 1 to 39 (MKLNELRDNHGARPKSKRLGRGIGSGKGKTSGKGVKGQK) are disordered. Residues 21–35 (RGIGSGKGKTSGKGV) show a composition bias toward gly residues.

The protein belongs to the universal ribosomal protein uL15 family. As to quaternary structure, part of the 50S ribosomal subunit.

Functionally, binds to the 23S rRNA. This Granulibacter bethesdensis (strain ATCC BAA-1260 / CGDNIH1) protein is Large ribosomal subunit protein uL15.